The sequence spans 420 residues: Probable 3-isopropylmalate dehydratase large subunit (420 aa).

[4Fe-4S] cluster contacts are provided by C301, C361, and C364.

This sequence belongs to the aconitase/IPM isomerase family. LeuC type 2 subfamily. Heterodimer of LeuC and LeuD. [4Fe-4S] cluster is required as a cofactor.

The enzyme catalyses (2R,3S)-3-isopropylmalate = (2S)-2-isopropylmalate. Its pathway is amino-acid biosynthesis; L-leucine biosynthesis; L-leucine from 3-methyl-2-oxobutanoate: step 2/4. In terms of biological role, catalyzes the isomerization between 2-isopropylmalate and 3-isopropylmalate, via the formation of 2-isopropylmaleate. This Methanosarcina mazei (strain ATCC BAA-159 / DSM 3647 / Goe1 / Go1 / JCM 11833 / OCM 88) (Methanosarcina frisia) protein is Probable 3-isopropylmalate dehydratase large subunit.